The sequence spans 563 residues: Ribulokinase (563 aa).

The protein belongs to the ribulokinase family.

The enzyme catalyses D-ribulose + ATP = D-ribulose 5-phosphate + ADP + H(+). It catalyses the reaction L-ribulose + ATP = L-ribulose 5-phosphate + ADP + H(+). Its pathway is carbohydrate degradation; L-arabinose degradation via L-ribulose; D-xylulose 5-phosphate from L-arabinose (bacterial route): step 2/3. The sequence is that of Ribulokinase from Mycolicibacterium smegmatis (Mycobacterium smegmatis).